The chain runs to 632 residues: Putative acetyl-CoA decarbonylase/synthase complex subunit alpha-like (632 aa).

Residues H200, H226, C263, C379, C408, and C438 each coordinate [Ni-4Fe-4S] cluster.

Belongs to the Ni-containing carbon monoxide dehydrogenase family.

Its function is as follows. Part of the ACDS complex that catalyzes the reversible cleavage of acetyl-CoA, allowing autotrophic growth from CO(2). The alpha-epsilon subcomponent functions as a carbon monoxide dehydrogenase. This Methanopyrus kandleri (strain AV19 / DSM 6324 / JCM 9639 / NBRC 100938) protein is Putative acetyl-CoA decarbonylase/synthase complex subunit alpha-like (cdhA2).